A 200-amino-acid polypeptide reads, in one-letter code: Ribonuclease HII (200 aa).

The 187-residue stretch at 14-200 folds into the RNase H type-2 domain; that stretch reads SRLAGVDEVG…FAPVKQWQLL (187 aa). 3 residues coordinate a divalent metal cation: Asp-20, Glu-21, and Asp-112.

The protein belongs to the RNase HII family. Mn(2+) serves as cofactor. It depends on Mg(2+) as a cofactor.

It is found in the cytoplasm. It catalyses the reaction Endonucleolytic cleavage to 5'-phosphomonoester.. Endonuclease that specifically degrades the RNA of RNA-DNA hybrids. This chain is Ribonuclease HII, found in Chromohalobacter salexigens (strain ATCC BAA-138 / DSM 3043 / CIP 106854 / NCIMB 13768 / 1H11).